Consider the following 1061-residue polypeptide: Ribonuclease 3 (1061 aa).

Disordered regions lie at residues 1–20 (MDFT…QIHQ) and 149–244 (PLHS…SYNE). Residues 156–173 (KTPERKENEEDSDSEIRS) are compositionally biased toward basic and acidic residues. RNase III domains follow at residues 586–759 (LSVF…LDSG) and 811–935 (FHRL…VDKG). E851, D921, and E924 together coordinate Mg(2+). In terms of domain architecture, DRBM spans 962 to 1037 (DAKSHLQQWC…AENALAALEK (76 aa)).

This sequence belongs to the ribonuclease III family. It depends on Mg(2+) as a cofactor. Mn(2+) is required as a cofactor.

Its subcellular location is the nucleus. It catalyses the reaction Endonucleolytic cleavage to 5'-phosphomonoester.. Executes the initial step of microRNA (miRNA) processing in the nucleus, that is the cleavage of pri-miRNA to release pre-miRNA. Involved in pre-rRNA processing. Cleaves double-strand RNA and does not cleave single-strand RNA. Involved in fertility. Required for the function or synthesis of the let-7 miRNA. This Caenorhabditis briggsae protein is Ribonuclease 3.